We begin with the raw amino-acid sequence, 488 residues long: Probable metabolite transport protein YBR241C (488 aa).

Over 1 to 18 (MAETERLMPNGGSRETKP) the chain is Cytoplasmic. Residues 19 to 39 (LITGHLILGTIVACLGSIQYG) form a helical membrane-spanning segment. Residues 40–87 (YHIAELNAPQEFLSCSRFEAPDENISYDDTWVGQHGLKQCIALTDSQY) are Vacuolar-facing. An N-linked (GlcNAc...) asparagine glycan is attached at Asn-63. Residues 88-108 (GAITSIFSIGGLFGSYYAGNW) traverse the membrane as a helical segment. Over 109-121 (ANRYGRKYVSMGA) the chain is Cytoplasmic. A helical membrane pass occupies residues 122–142 (SAMCMVSSLLLFFSNSYLQLL). The Vacuolar segment spans residues 143-146 (FGRF). A helical transmembrane segment spans residues 147-167 (LVGMSCGTAIVITPLFINEIA). Residues 168 to 178 (PVEWRGAMGSM) are Cytoplasmic-facing. Residues 179 to 198 (NQVSINLGILLTQTLALKYA) form a helical membrane-spanning segment. At 199-204 (DSYNWR) the chain is on the vacuolar side. Residues 205-225 (WLLFSGSVIAVANILAWLKVD) traverse the membrane as a helical segment. At 226–299 (ESPRWLVSHG…DPSYKKPRTV (74 aa)) the chain is on the cytoplasmic side. Residues 258–279 (EIQDWQRSHGHNRDPESSEETH) are compositionally biased toward basic and acidic residues. A disordered region spans residues 258-281 (EIQDWQRSHGHNRDPESSEETHSG). A helical membrane pass occupies residues 300 to 320 (ILAILSCQQFCGINSIIFYGV). Over 321-322 (KV) the chain is Vacuolar. The helical transmembrane segment at 323 to 337 (IGKILPDYSIQVNFA) threads the bilayer. Residues 338-344 (ISILNVV) are Cytoplasmic-facing. A helical membrane pass occupies residues 345–364 (VTLAASAIIDHVGRRPLLLA). Residues 365–390 (STTVMTAMSLLISVGLTLSVSFLLVT) are Vacuolar-facing. Residues 391–411 (ATFVYIAAFAIGLGPIPFLII) traverse the membrane as a helical segment. Over 412-419 (GELSYPQD) the chain is Cytoplasmic. A helical transmembrane segment spans residues 420-442 (AATAQSFGTVCNWLATFIVGYLF). At 443-446 (PIGH) the chain is on the vacuolar side. Residues 447-463 (GLMGGYVFAIFAAIAAM) form a helical membrane-spanning segment. Over 464 to 488 (FATYVYKRVPETKGKTTYSEVWAGY) the chain is Cytoplasmic.

It belongs to the major facilitator superfamily. Sugar transporter (TC 2.A.1.1) family.

Its subcellular location is the vacuole membrane. The chain is Probable metabolite transport protein YBR241C from Saccharomyces cerevisiae (strain ATCC 204508 / S288c) (Baker's yeast).